The sequence spans 351 residues: Anthranilate phosphoribosyltransferase (351 aa).

5-phospho-alpha-D-ribose 1-diphosphate is bound by residues glycine 80, 83-84, threonine 88, 90-93, 108-116, and serine 120; these read GD, NIST, and KHGNRSVTS. Glycine 80 serves as a coordination point for anthranilate. Serine 92 provides a ligand contact to Mg(2+). Asparagine 111 contributes to the anthranilate binding site. Residue arginine 166 coordinates anthranilate. Residues aspartate 229 and glutamate 230 each coordinate Mg(2+).

Belongs to the anthranilate phosphoribosyltransferase family. Homodimer. Mg(2+) is required as a cofactor.

The enzyme catalyses N-(5-phospho-beta-D-ribosyl)anthranilate + diphosphate = 5-phospho-alpha-D-ribose 1-diphosphate + anthranilate. It participates in amino-acid biosynthesis; L-tryptophan biosynthesis; L-tryptophan from chorismate: step 2/5. In terms of biological role, catalyzes the transfer of the phosphoribosyl group of 5-phosphorylribose-1-pyrophosphate (PRPP) to anthranilate to yield N-(5'-phosphoribosyl)-anthranilate (PRA). This Chlorobium limicola (strain DSM 245 / NBRC 103803 / 6330) protein is Anthranilate phosphoribosyltransferase.